The following is a 143-amino-acid chain: HTH-type transcriptional regulator BudR (143 aa).

Positions 1-58 constitute an HTH lysR-type domain; it reads MELRYLRYFVAVARERHFTRAAKALGISQPPLSQQIKRLEEEVGTPLFRRLTRGVELT. A DNA-binding region (H-T-H motif) is located at residues 18–37; sequence FTRAAKALGISQPPLSQQIK.

This sequence belongs to the LysR transcriptional regulatory family.

Its function is as follows. Regulator of the budABC operon for 2,3-butanediol synthesis. The polypeptide is HTH-type transcriptional regulator BudR (budR) (Klebsiella aerogenes (Enterobacter aerogenes)).